A 1494-amino-acid polypeptide reads, in one-letter code: DNA-directed RNA polymerase subunit beta' (1494 aa).

Positions 67, 69, 82, and 85 each coordinate Zn(2+). The Mg(2+) site is built by Asp499, Asp501, and Asp503. The Zn(2+) site is built by Cys868, Cys944, Cys951, and Cys954.

The protein belongs to the RNA polymerase beta' chain family. The RNAP catalytic core consists of 2 alpha, 1 beta, 1 beta' and 1 omega subunit. When a sigma factor is associated with the core the holoenzyme is formed, which can initiate transcription. Requires Mg(2+) as cofactor. The cofactor is Zn(2+).

The enzyme catalyses RNA(n) + a ribonucleoside 5'-triphosphate = RNA(n+1) + diphosphate. In terms of biological role, DNA-dependent RNA polymerase catalyzes the transcription of DNA into RNA using the four ribonucleoside triphosphates as substrates. The protein is DNA-directed RNA polymerase subunit beta' of Chlorobaculum parvum (strain DSM 263 / NCIMB 8327) (Chlorobium vibrioforme subsp. thiosulfatophilum).